The chain runs to 806 residues: Phenylalanine--tRNA ligase beta subunit (806 aa).

One can recognise a tRNA-binding domain in the interval 40–155 (NKGVKGVVVG…SDAEVGADAL (116 aa)). The 76-residue stretch at 409-484 (VQERTVSVTA…RLYGYDHIPV (76 aa)) folds into the B5 domain. Residues Asp-462, Asp-468, Glu-471, and Glu-472 each coordinate Mg(2+). The region spanning 712-805 (PRFPSMTRDM…VEEKFGAELR (94 aa)) is the FDX-ACB domain.

Belongs to the phenylalanyl-tRNA synthetase beta subunit family. Type 1 subfamily. Tetramer of two alpha and two beta subunits. The cofactor is Mg(2+).

The protein localises to the cytoplasm. The catalysed reaction is tRNA(Phe) + L-phenylalanine + ATP = L-phenylalanyl-tRNA(Phe) + AMP + diphosphate + H(+). This Bacillus thuringiensis subsp. konkukian (strain 97-27) protein is Phenylalanine--tRNA ligase beta subunit.